The sequence spans 49 residues: Beta-toxin Rc1 (49 aa).

Cystine bridges form between Cys-15/Cys-31, Cys-22/Cys-40, and Cys-26/Cys-42.

Belongs to the long (4 C-C) scorpion toxin superfamily. Sodium channel inhibitor family. Beta subfamily. In terms of tissue distribution, expressed by the venom gland.

The protein resides in the secreted. Beta toxins bind voltage-independently at site-4 of sodium channels (Nav) and shift the voltage of activation toward more negative potentials thereby affecting sodium channel activation and promoting spontaneous and repetitive firing. This toxin acts on X.laevis Nav1.6/SCN8A and insect BgNav1 channels, and also displays a small but significant effect on X.laevis Nav1.4/SCN4A channels. In mice induces nociception (licking and lifting behaviors) during the first 15 minutes after injection, and increases the release of TNF-alpha in J774.1 cells. This chain is Beta-toxin Rc1, found in Rhopalurus crassicauda (Scorpion).